Consider the following 272-residue polypeptide: 2,3,4,5-tetrahydropyridine-2,6-dicarboxylate N-succinyltransferase (272 aa).

The substrate site is built by Arg104 and Asp141.

The protein belongs to the transferase hexapeptide repeat family. In terms of assembly, homotrimer.

The protein resides in the cytoplasm. It catalyses the reaction (S)-2,3,4,5-tetrahydrodipicolinate + succinyl-CoA + H2O = (S)-2-succinylamino-6-oxoheptanedioate + CoA. It participates in amino-acid biosynthesis; L-lysine biosynthesis via DAP pathway; LL-2,6-diaminopimelate from (S)-tetrahydrodipicolinate (succinylase route): step 1/3. The sequence is that of 2,3,4,5-tetrahydropyridine-2,6-dicarboxylate N-succinyltransferase from Dechloromonas aromatica (strain RCB).